The following is a 53-amino-acid chain: Small polypeptide DEVIL 16 (53 aa).

A glycan (N-linked (GlcNAc...) asparagine) is linked at N6. Residues 14–45 (TFGQKCSHVVKKQRAKFYILRRCIAMLVCWHD) are required for DVL/RTFL small polypeptide activity. Residues 30–46 (FYILRRCIAMLVCWHDQ) form a helical membrane-spanning segment.

Belongs to the DVL/RTFL small polypeptides family. In terms of tissue distribution, mostly expressed in stems, flower buds, flowers and seedling shoots, to a lesser extent, in roots and young cauline leaves, but not in mature rosette leaves. Barely observed in cotyledons and leaf primordia.

It localises to the cell membrane. Functionally, small polypeptide acting as a regulatory molecule which coordinates cellular responses required for differentiation, growth and development, probably by restricting polar cell proliferation in lateral organs (e.g. leaves) and coordinating socket cell recruitment and differentiation at trichome sites. Regulates the positional cue and cell proliferation along the body axis. This chain is Small polypeptide DEVIL 16, found in Arabidopsis thaliana (Mouse-ear cress).